We begin with the raw amino-acid sequence, 144 residues long: Ribosome-binding factor A (144 aa).

Residues 121–144 form a disordered region; sequence KAQTGVEEPLENTAEGEENPSGGE. Over residues 128 to 138 the composition is skewed to acidic residues; it reads EPLENTAEGEE.

This sequence belongs to the RbfA family. As to quaternary structure, monomer. Binds 30S ribosomal subunits, but not 50S ribosomal subunits or 70S ribosomes.

The protein localises to the cytoplasm. Its function is as follows. One of several proteins that assist in the late maturation steps of the functional core of the 30S ribosomal subunit. Associates with free 30S ribosomal subunits (but not with 30S subunits that are part of 70S ribosomes or polysomes). Required for efficient processing of 16S rRNA. May interact with the 5'-terminal helix region of 16S rRNA. In Synechococcus sp. (strain JA-2-3B'a(2-13)) (Cyanobacteria bacterium Yellowstone B-Prime), this protein is Ribosome-binding factor A.